Reading from the N-terminus, the 30-residue chain is Diuretic hormone 2 (30 aa).

Valine amide is present on Val-30.

The protein belongs to the sauvagine/corticotropin-releasing factor/urotensin I family.

It is found in the secreted. Regulation of fluid secretion. This chain is Diuretic hormone 2, found in Manduca sexta (Tobacco hawkmoth).